Here is a 227-residue protein sequence, read N- to C-terminus: Orotidine 5'-phosphate decarboxylase (227 aa).

Substrate contacts are provided by residues Asp-8, Lys-30, 59-68 (DLKLYDIPNT), Thr-118, Arg-178, Gln-187, Gly-207, and Arg-208. Lys-61 serves as the catalytic Proton donor.

This sequence belongs to the OMP decarboxylase family. Type 1 subfamily. As to quaternary structure, homodimer.

It carries out the reaction orotidine 5'-phosphate + H(+) = UMP + CO2. It functions in the pathway pyrimidine metabolism; UMP biosynthesis via de novo pathway; UMP from orotate: step 2/2. Functionally, catalyzes the decarboxylation of orotidine 5'-monophosphate (OMP) to uridine 5'-monophosphate (UMP). The polypeptide is Orotidine 5'-phosphate decarboxylase (Sulfurimonas denitrificans (strain ATCC 33889 / DSM 1251) (Thiomicrospira denitrificans (strain ATCC 33889 / DSM 1251))).